The chain runs to 425 residues: 3-deoxy-D-manno-octulosonic acid transferase (425 aa).

The chain crosses the membrane as a helical; Signal-anchor span at residues 3-23; it reads ELLYTALLYLIQPLIWIRLWV. The Proton acceptor role is filled by E60. Residues 268-269, 309-311, and 335-338 each bind CMP; these read PR, MGE, and NPLE.

This sequence belongs to the glycosyltransferase group 1 family. Glycosyltransferase 30 subfamily.

Its subcellular location is the cell inner membrane. It catalyses the reaction lipid IVA (E. coli) + CMP-3-deoxy-beta-D-manno-octulosonate = alpha-Kdo-(2-&gt;6)-lipid IVA (E. coli) + CMP + H(+). The catalysed reaction is alpha-Kdo-(2-&gt;6)-lipid IVA (E. coli) + CMP-3-deoxy-beta-D-manno-octulosonate = alpha-Kdo-(2-&gt;4)-alpha-Kdo-(2-&gt;6)-lipid IVA (E. coli) + CMP + H(+). It participates in glycolipid biosynthesis; KDO(2)-lipid A biosynthesis; KDO(2)-lipid A from CMP-3-deoxy-D-manno-octulosonate and lipid IV(A): step 1/4. It functions in the pathway glycolipid biosynthesis; KDO(2)-lipid A biosynthesis; KDO(2)-lipid A from CMP-3-deoxy-D-manno-octulosonate and lipid IV(A): step 2/4. Its pathway is bacterial outer membrane biogenesis; LPS core biosynthesis. In terms of biological role, involved in lipopolysaccharide (LPS) biosynthesis. Catalyzes the transfer of two 3-deoxy-D-manno-octulosonate (Kdo) residues from CMP-Kdo to lipid IV(A), the tetraacyldisaccharide-1,4'-bisphosphate precursor of lipid A. This is 3-deoxy-D-manno-octulosonic acid transferase (waaA) from Escherichia coli O157:H7.